Here is a 387-residue protein sequence, read N- to C-terminus: MSSVEIVAQQLLAAEHPRRMGKGAAADPRRAALGELTNLNAAAATNGKVGPAKKPLKASCAQKPKLTQLVASMIQTGAAASAPVLAKPSVKEEQELCQAFSEVLLAVQDVDEQDADQPQLCSQYVKDIYKYLHILEEQQPVRANYMQGYEVTERMRALLVDWLVQVHSRFQLLQETLYLTVAILDRFLQVHPVSRRKLQLVGVTAMLVACKYEEMYAPEVGDFAYITDNAFTKSQIVEMEQVILRSLSFQLGRPLPLHFLRRATKVAGADVEKHTLAKYLMELTLLDYHMVHYRPSEVAAAALCLSQLLLDGLPWSLTQQQYSTYEEQHLKPIMQHMAKNVVLVNEGRTKFLAVKKKYSSSKLMKISLIPQLNSSTVKTMADALHDH.

This sequence belongs to the cyclin family. Cyclin AB subfamily. Interacts with the CDK1 protein kinase to form a serine/threonine kinase holoenzyme complex also known as maturation promoting factor (MPF). The cyclin subunit imparts substrate specificity to the complex.

In terms of biological role, essential for the control of the cell cycle at the G2/M (mitosis) transition. This is G2/mitotic-specific cyclin-B2 (ccnb2) from Oryzias latipes (Japanese rice fish).